Reading from the N-terminus, the 82-residue chain is Putative defensin-like protein 134 (82 aa).

Residues 1 to 26 (MEVRSLNLCFLLVLVLLMSPAPTAVA) form the signal peptide. Intrachain disulfides connect cysteine 32–cysteine 79, cysteine 42–cysteine 68, cysteine 47–cysteine 74, and cysteine 51–cysteine 76.

It belongs to the DEFL family.

It localises to the secreted. This chain is Putative defensin-like protein 134, found in Arabidopsis thaliana (Mouse-ear cress).